A 442-amino-acid chain; its full sequence is Serum response factor-binding protein 1 (442 aa).

Coiled-coil stretches lie at residues 55 to 77 and 118 to 140; these read EDAL…AMKE and LLKR…RQNA. 2 disordered regions span residues 137-336 and 358-442; these read RQNA…LETH and FHSL…TFDD. 2 stretches are compositionally biased toward basic and acidic residues: residues 149 to 159 and 167 to 188; these read ASKESQCEDIP and ESQH…DPTT. A Glycyl lysine isopeptide (Lys-Gly) (interchain with G-Cter in SUMO2) cross-link involves residue Lys202. Residue Ser215 is modified to Phosphoserine. A compositionally biased stretch (polar residues) spans 237–247; it reads GNHSQGKASTR. Over residues 266–278 the composition is skewed to acidic residues; it reads VSEEEKEYFDDST. Ser277, Ser292, and Ser294 each carry phosphoserine. Lys329 is covalently cross-linked (Glycyl lysine isopeptide (Lys-Gly) (interchain with G-Cter in SUMO2)). Residue Ser362 is modified to Phosphoserine. Basic and acidic residues predominate over residues 367–382; it reads SRRDPREQAPKNKAPD.

Interacts with SRF. Forms complexes with SRF and SRF cofactors ARID2, MYOCD and NKX2-5. Interacts with the N-terminus of SLC2A4.

The protein resides in the cytoplasm. Its subcellular location is the perinuclear region. Its function is as follows. May be involved in regulating transcriptional activation of cardiac genes during the aging process. May play a role in biosynthesis and/or processing of SLC2A4 in adipose cells. The chain is Serum response factor-binding protein 1 from Rattus norvegicus (Rat).